We begin with the raw amino-acid sequence, 158 residues long: Phosphopantetheine adenylyltransferase (158 aa).

T10 is a binding site for substrate. ATP contacts are provided by residues 10–11 and H18; that span reads TF. The substrate site is built by K42, L74, and R88. ATP is bound by residues 89 to 91, E99, and 124 to 130; these read GLR and NSFISST.

Belongs to the bacterial CoaD family. Homohexamer. Mg(2+) serves as cofactor.

It is found in the cytoplasm. The catalysed reaction is (R)-4'-phosphopantetheine + ATP + H(+) = 3'-dephospho-CoA + diphosphate. It participates in cofactor biosynthesis; coenzyme A biosynthesis; CoA from (R)-pantothenate: step 4/5. In terms of biological role, reversibly transfers an adenylyl group from ATP to 4'-phosphopantetheine, yielding dephospho-CoA (dPCoA) and pyrophosphate. In Shewanella woodyi (strain ATCC 51908 / MS32), this protein is Phosphopantetheine adenylyltransferase.